The chain runs to 429 residues: Enolase (429 aa).

Position 163 (glutamine 163) interacts with (2R)-2-phosphoglycerate. Residue glutamate 205 is the Proton donor of the active site. Residues aspartate 242, glutamate 285, and aspartate 312 each contribute to the Mg(2+) site. 4 residues coordinate (2R)-2-phosphoglycerate: lysine 337, arginine 366, serine 367, and lysine 388. Lysine 337 (proton acceptor) is an active-site residue.

Belongs to the enolase family. Requires Mg(2+) as cofactor.

It is found in the cytoplasm. Its subcellular location is the secreted. The protein resides in the cell surface. It carries out the reaction (2R)-2-phosphoglycerate = phosphoenolpyruvate + H2O. The protein operates within carbohydrate degradation; glycolysis; pyruvate from D-glyceraldehyde 3-phosphate: step 4/5. Functionally, catalyzes the reversible conversion of 2-phosphoglycerate (2-PG) into phosphoenolpyruvate (PEP). It is essential for the degradation of carbohydrates via glycolysis. The polypeptide is Enolase (Methylorubrum populi (strain ATCC BAA-705 / NCIMB 13946 / BJ001) (Methylobacterium populi)).